Consider the following 200-residue polypeptide: Inner membrane-spanning protein YciB (200 aa).

The next 6 helical transmembrane spans lie at 7–27 (HPLF…FVNA), 32–52 (FAAT…SYVV), 56–76 (IPLM…LTLV), 93–113 (LFAA…AIMF), 126–146 (ILTF…EIIW), and 153–173 (FWVG…AIAQ).

It belongs to the YciB family.

Its subcellular location is the cell inner membrane. In terms of biological role, plays a role in cell envelope biogenesis, maintenance of cell envelope integrity and membrane homeostasis. This is Inner membrane-spanning protein YciB from Bradyrhizobium sp. (strain ORS 278).